A 652-amino-acid chain; its full sequence is Probable potassium transport system protein Kup (652 aa).

Residues 1–20 (MSNDTSPGTSSVDSKSSDPS) show a composition bias toward low complexity. Residues 1–26 (MSNDTSPGTSSVDSKSSDPSYGVPGH) form a disordered region. The next 12 membrane-spanning stretches (helical) occupy residues 36 to 56 (LSLG…LYAL), 76 to 96 (LVSL…VMFI), 125 to 145 (WLIV…MITP), 161 to 181 (PSFD…LFCI), 193 to 213 (FGPI…FNII), 228 to 248 (AIHF…SVVL), 270 to 290 (LGWY…QCAL), 314 to 334 (LIIL…TGAF), 362 to 382 (IYIP…IAMF), 391 to 411 (AYGI…GVLV), 419 to 439 (AWQS…FFLS), and 444 to 464 (IPEG…MLMT).

The protein belongs to the HAK/KUP transporter (TC 2.A.72) family.

Its subcellular location is the cell inner membrane. The enzyme catalyses K(+)(in) + H(+)(in) = K(+)(out) + H(+)(out). In terms of biological role, transport of potassium into the cell. Likely operates as a K(+):H(+) symporter. The chain is Probable potassium transport system protein Kup from Zymomonas mobilis subsp. mobilis (strain ATCC 31821 / ZM4 / CP4).